Here is a 171-residue protein sequence, read N- to C-terminus: MTAILITGYRSFEIGIFDHKDPRVSIIKQAIRKDLIGYLENGVDWFIFTGNLGFEQWALEVANELKEEYPLQIATIFLFETHGDRWNEKNKEVLSQFRAVDFVKYYFPNYEQPTQFSQYYQFLLEKTEGAYVFYDTENETNLKYFLKKAKDMPHYQLLLLTFDRLNDMSQS.

The protein belongs to the UPF0398 family.

The polypeptide is UPF0398 protein SPy_1647/M5005_Spy1353 (Streptococcus pyogenes serotype M1).